We begin with the raw amino-acid sequence, 315 residues long: Probable inactive acetaldehyde dehydrogenase 1 (315 aa).

Residues 14-17 (SGDV) and N288 each bind NAD(+).

The protein belongs to the acetaldehyde dehydrogenase family.

The chain is Probable inactive acetaldehyde dehydrogenase 1 from Mycolicibacterium vanbaalenii (strain DSM 7251 / JCM 13017 / BCRC 16820 / KCTC 9966 / NRRL B-24157 / PYR-1) (Mycobacterium vanbaalenii).